Consider the following 489-residue polypeptide: MPNILHPFIIIMTLLVVATGNQASIDKTTQWPRMKPTKKPPPRDEGPSKLGSISTTVSPTAIGITEEVTDAMMDAYTITSTGSTTFSSDTYSADYHTEAMVPPGVGPGNYTLDYNECFFNFCECCPPERGPPGPVGEKGLPGIPGGKGEMGPPGPPGQEGLTGAPGTHGVKGEKGDTGASGLPGIPGVTGKQGEKGESGPKGDKGDTGFPGLKGDPGERGEPGWNGTKGGMGEPGKQGLTGPPGPDGIKGEKGDKGDCPFGEKGQKGSIGEPGPQGPKGDPGVPGTNGTDGLPGSKGPKGDPGPLSKQGEPGPPGPQGPPGQRGMPGMKGTRGLKGARGIRGFKGFKGEPAVQKRSAFSVGLFPSRSFPPPGLPIRFDKIIYNEEAHWDPNASKFNCTHGGVYVFSYYITVRNRPLRAALVVNGIRKLRTRDSLYGQDIDQASNMAVLRLSSGDQVWLETLRDWNGVYSSSEDDSTFSGFLLYADATKD.

A signal peptide spans 1–23 (MPNILHPFIIIMTLLVVATGNQA). The tract at residues 27–57 (KTTQWPRMKPTKKPPPRDEGPSKLGSISTTV) is disordered. Residue N109 is glycosylated (N-linked (GlcNAc...) asparagine). The disordered stretch occupies residues 133-335 (GPVGEKGLPG…PGMKGTRGLK (203 aa)). Gly residues predominate over residues 142 to 151 (GIPGGKGEMG). Collagen-like domains follow at residues 145–204 (GGKG…KGDK), 205–255 (GDTG…KGDK), and 264–323 (GQKG…PGQR). A compositionally biased stretch (basic and acidic residues) spans 192–206 (QGEKGESGPKGDKGD). N-linked (GlcNAc...) asparagine glycosylation occurs at N225. The segment covering 226 to 235 (GTKGGMGEPG) has biased composition (gly residues). Positions 248-257 (IKGEKGDKGD) are enriched in basic and acidic residues. A glycan (N-linked (GlcNAc...) asparagine) is linked at N287. Low complexity predominate over residues 290–310 (DGLPGSKGPKGDPGPLSKQGE). One can recognise a C1q domain in the interval 351 to 488 (AVQKRSAFSV…GFLLYADATK (138 aa)). 2 N-linked (GlcNAc...) asparagine glycosylation sites follow: N391 and N396.

It belongs to the OTOL1 family. In terms of assembly, homooligomer; disulfide-linked; probably forms homotrimers. Interacts with otomp.

It localises to the secreted. Its subcellular location is the extracellular space. The protein resides in the extracellular matrix. In terms of biological role, collagen-like protein, which provides an organic scaffold for otoliths onto the sensory epithelium of the inner ear. Acts as a scaffold for biomineralization by sequestering calcium. The chain is Otolin-1-A (otol1a) from Danio rerio (Zebrafish).